Reading from the N-terminus, the 289-residue chain is SNF1-related protein kinase regulatory subunit beta-2 (289 aa).

The span at 1–10 (MGNVNAREEA) shows a compositional bias: basic and acidic residues. The interval 1–59 (MGNVNAREEANSNNASAVEDEDAEICSREAMSAASDGNHVAPPELMGQSPPHSPRATQS) is disordered. Gly2 is lipidated: N-myristoyl glycine. Residues 103 to 180 (PTMITWCHGG…AGNTFNILDL (78 aa)) form a kinase-interacting sequence (KIS) region. Positions 217-289 (EPPVVPPHLQ…TVVLYKSLQR (73 aa)) are association with SNF1 complex (ASC).

It belongs to the 5'-AMP-activated protein kinase beta subunit family. As to quaternary structure, subunit of a probable heterotrimeric complex consisting of an alpha catalytic (KIN10 or KIN11) subunit, and a beta (KINB) and a gamma (KING or SNF4) non-catalytic regulatory subunits. Interacts with SNF4. Interacts with FLZ1, FLZ2, FLZ8, FLZ9, FLZ10, FLZ12, FLZ13 and FLZ14. In terms of processing, sumoylated. In terms of tissue distribution, expressed in leaves, stems, roots, flower buds and flowers. Not detectable in siliques.

The protein localises to the cell membrane. Regulatory subunit of the probable trimeric SNF1-related protein kinase (SnRK) complex, which may play a role in a signal transduction cascade regulating gene expression and carbohydrate metabolism in higher plants. The SnRK complex may also be involved in the regulation of fatty acid synthesis by phosphorylation of acetyl-CoA carboxylase and in assimilation of nitrogen by phosphorylating nitrate reductase. In Arabidopsis thaliana (Mouse-ear cress), this protein is SNF1-related protein kinase regulatory subunit beta-2 (KINB2).